The following is a 306-amino-acid chain: Probable C-terminal domain small phosphatase (306 aa).

Residues 1–36 (MNSSPITQVSNPNDSLNHSSTNLIPSSHNSLNNYPQ) are compositionally biased toward polar residues. 2 disordered regions span residues 1–45 (MNSS…NRKK) and 61–116 (NDQN…NKDS). A compositionally biased stretch (low complexity) spans 61–111 (NDQNNGNNINTDNGASNNDKLQQQKQYNQQQQQQYNQHQQQQQQQQQQQQY). The FCP1 homology domain maps to 132-290 (RHVGLKTLVL…LDLLPLLDDL (159 aa)). D142 serves as the catalytic 4-aspartylphosphate intermediate. The Mg(2+) site is built by D142, D144, and N253. The active-site Proton donor is the D144.

Monomer. Mg(2+) serves as cofactor.

Its subcellular location is the nucleus. The catalysed reaction is O-phospho-L-seryl-[protein] + H2O = L-seryl-[protein] + phosphate. The enzyme catalyses O-phospho-L-threonyl-[protein] + H2O = L-threonyl-[protein] + phosphate. In terms of biological role, may function as a phosphatase involved in the regulation of cell growth and differentiation. The chain is Probable C-terminal domain small phosphatase (fcpA) from Dictyostelium discoideum (Social amoeba).